The sequence spans 329 residues: Isopenicillin N synthase (329 aa).

Isopenicillin N-binding residues include Arg87, Tyr91, Ser183, and Tyr189. Residues Arg87, Tyr91, Ser183, Tyr189, His212, and Asp214 each contribute to the N-[(5S)-5-amino-5-carboxypentanoyl]-L-cysteinyl-D-valine site. One can recognise a Fe2OG dioxygenase domain in the interval Thr180 to Ala286. 3 residues coordinate Fe(2+): His212, Asp214, and His268. Arg277 provides a ligand contact to 2-oxoglutarate. An isopenicillin N-binding site is contributed by Ser279. Ser279 lines the N-[(5S)-5-amino-5-carboxypentanoyl]-L-cysteinyl-D-valine pocket.

This sequence belongs to the iron/ascorbate-dependent oxidoreductase family. Fe cation serves as cofactor. Requires L-ascorbate as cofactor.

The catalysed reaction is N-[(5S)-5-amino-5-carboxypentanoyl]-L-cysteinyl-D-valine + O2 = isopenicillin N + 2 H2O. Its pathway is antibiotic biosynthesis; penicillin G biosynthesis; penicillin G from L-alpha-aminoadipate and L-cysteine and L-valine: step 2/3. Functionally, removes, in the presence of oxygen, 4 hydrogen atoms from delta-L-(alpha-aminoadipyl)-L-cysteinyl-D-valine (ACV) to form the azetidinone and thiazolidine rings of isopenicillin. The polypeptide is Isopenicillin N synthase (pcbC) (Streptomyces jumonjinensis).